We begin with the raw amino-acid sequence, 187 residues long: Abscisic acid receptor PYL9 (187 aa).

An START-like region spans residues 27–178 (HLCRENQCTS…NLKSLADVSE (152 aa)). Intrachain disulfides connect C29-C159 and C34-C159. Residues K63, 91-96 (ATTSTE), 118-124 (RLKNYSS), and E143 contribute to the abscisate site. The short motif at 87 to 91 (SGLPA) is the Gate loop element. A Latch loop motif is present at residues 117–119 (HRL).

This sequence belongs to the PYR/PYL/RCAR abscisic acid intracellular receptor family. In terms of assembly, homodimer. Monomer. Binds ABA on one subunit only. Binds to CARs protein in an ABA-independent manner, both at the plasma membrane and in the nucleus. Binds specifically (+)-ABA but not (-)-ABA. Interacts with HAB1, ABI1 and ABI2, and possibly with other PP2Cs. Interacts with TOPP1. Interacts with DDA1. In terms of tissue distribution, expressed in root tips, vascular tissues, stomata, flowers, pollen tubes and developing seeds.

It is found in the cytoplasm. The protein resides in the nucleus. The protein localises to the cell membrane. In terms of biological role, receptor for abscisic acid (ABA) required for ABA-mediated responses such as stomatal closure and germination inhibition. Inhibits the activity of group-A protein phosphatases type 2C (PP2Cs) in an ABA-independent manner but more efficiently when activated by ABA. Confers enhanced sensitivity to ABA. Can be activated only by (+)-ABA but not by (-)-ABA. The protein is Abscisic acid receptor PYL9 (PYL9) of Arabidopsis thaliana (Mouse-ear cress).